The chain runs to 73 residues: Large ribosomal subunit protein uL29 (73 aa).

Belongs to the universal ribosomal protein uL29 family.

This chain is Large ribosomal subunit protein uL29, found in Synechococcus sp. (strain JA-2-3B'a(2-13)) (Cyanobacteria bacterium Yellowstone B-Prime).